Here is a 172-residue protein sequence, read N- to C-terminus: Myosin regulatory light polypeptide 9 (172 aa).

The segment covering 1-16 (MSSKRAKAKTTKKRPQ) has biased composition (basic residues). The segment at 1 to 20 (MSSKRAKAKTTKKRPQRATS) is disordered. Ser2 is modified (N-acetylserine). Residue Thr19 is modified to Phosphothreonine; by MLCK, CIT and ROCK2. Ser20 carries the phosphoserine; by CDC42BP, CIT, MLCK, PAK1, ROCK1, ROCK2, DAPK1, DAPK2 and ZIPK/DAPK3 modification. EF-hand domains follow at residues 29–64 (SQIQEFKEAFNMIDQNRDGFIDKEDLHDMLASLGKN), 98–133 (DPEDVIRNAFACFDEEASGFIHEDHLRELLTTMGDR), and 134–169 (FTDEEVDEMYREAPIDKKGNFNYVEFTRILKHGAKD). 4 residues coordinate Ca(2+): Asp42, Asn44, Asp46, and Asp53.

Myosin is a hexamer of 2 heavy chains and 4 light chains: interacts with myosin heavy chain MYO19. Interacts with LUZP1; the interaction results in inhibition of phosphorylation of MYL9 by DAPK3. Phosphorylation increases the actin-activated myosin ATPase activity and thereby regulates the contractile activity. It is required to generate the driving force in the migration of the cells but not necessary for localization of myosin-2 at the leading edge. Phosphorylation is required for myotube formation. Phosphorylated by DAPK3; DAPK3-mediated phosphorylation is inhibited by LUZP1.

It localises to the cytoplasm. Its subcellular location is the cytoskeleton. It is found in the cell cortex. In terms of biological role, myosin regulatory subunit that plays an important role in regulation of both smooth muscle and nonmuscle cell contractile activity via its phosphorylation. Implicated in cytokinesis, receptor capping, and cell locomotion. In myoblasts, regulates PIEZO1-dependent cortical actomyosin assembly involved in myotube formation. The chain is Myosin regulatory light polypeptide 9 (Myl9) from Mus musculus (Mouse).